The sequence spans 405 residues: Acetyl-CoA decarbonylase/synthase complex subunit delta (405 aa).

This sequence belongs to the CdhD family. In terms of assembly, heterodimer of delta and gamma chains. The ACDS complex is made up of alpha, epsilon, beta, gamma and delta chains with a probable stoichiometry of (alpha(2)epsilon(2))(4)-beta(8)-(gamma(1)delta(1))(8).

Functionally, part of a complex that catalyzes the reversible cleavage of acetyl-CoA, allowing autotrophic growth from CO(2). Probably maintains the overall quaternary structure of the ACDS complex. The chain is Acetyl-CoA decarbonylase/synthase complex subunit delta from Methanocaldococcus jannaschii (strain ATCC 43067 / DSM 2661 / JAL-1 / JCM 10045 / NBRC 100440) (Methanococcus jannaschii).